We begin with the raw amino-acid sequence, 248 residues long: 4-hydroxy-tetrahydrodipicolinate reductase (248 aa).

NAD(+)-binding positions include 9 to 14 (GAKGRV), 77 to 79 (GTT), and 104 to 107 (APNF). Residue His134 is the Proton donor/acceptor of the active site. His135 is a binding site for (S)-2,3,4,5-tetrahydrodipicolinate. Lys138 acts as the Proton donor in catalysis. (S)-2,3,4,5-tetrahydrodipicolinate is bound at residue 144 to 145 (GT).

It belongs to the DapB family.

It localises to the cytoplasm. It carries out the reaction (S)-2,3,4,5-tetrahydrodipicolinate + NAD(+) + H2O = (2S,4S)-4-hydroxy-2,3,4,5-tetrahydrodipicolinate + NADH + H(+). The enzyme catalyses (S)-2,3,4,5-tetrahydrodipicolinate + NADP(+) + H2O = (2S,4S)-4-hydroxy-2,3,4,5-tetrahydrodipicolinate + NADPH + H(+). Its pathway is amino-acid biosynthesis; L-lysine biosynthesis via DAP pathway; (S)-tetrahydrodipicolinate from L-aspartate: step 4/4. Its function is as follows. Catalyzes the conversion of 4-hydroxy-tetrahydrodipicolinate (HTPA) to tetrahydrodipicolinate. The protein is 4-hydroxy-tetrahydrodipicolinate reductase of Corynebacterium aurimucosum (strain ATCC 700975 / DSM 44827 / CIP 107346 / CN-1) (Corynebacterium nigricans).